Consider the following 372-residue polypeptide: Citrate synthase 2 (372 aa).

His257 is an active-site residue. Ser284 carries the post-translational modification Phosphoserine. Asp308 is a catalytic residue.

Belongs to the citrate synthase family. In terms of assembly, homodimer.

It catalyses the reaction oxaloacetate + acetyl-CoA + H2O = citrate + CoA + H(+). The protein operates within carbohydrate metabolism; tricarboxylic acid cycle; isocitrate from oxaloacetate: step 1/2. Functionally, might regulate the synthesis and function of enzymes involved in later enzymatic steps of Krebs cycle. Loss in activity results in sporulation defect. The protein is Citrate synthase 2 (citZ) of Bacillus subtilis (strain 168).